A 55-amino-acid chain; its full sequence is uncharacterized protein (55 aa).

Residues 27–44 (SFWFILISASSFLIYSLF) traverse the membrane as a helical segment.

The protein resides in the membrane. This is an uncharacterized protein from Dictyostelium discoideum (Social amoeba).